We begin with the raw amino-acid sequence, 122 residues long: Large ribosomal subunit protein uL14 (122 aa).

Belongs to the universal ribosomal protein uL14 family. As to quaternary structure, part of the 50S ribosomal subunit. Forms a cluster with proteins L3 and L19. In the 70S ribosome, L14 and L19 interact and together make contacts with the 16S rRNA in bridges B5 and B8. Can interact with ribosomal silencing factor RsfS, which may inhibit ribosomal subunit association.

In terms of biological role, binds to 23S rRNA. Forms part of two intersubunit bridges in the 70S ribosome. This Synechocystis sp. (strain ATCC 27184 / PCC 6803 / Kazusa) protein is Large ribosomal subunit protein uL14.